Here is a 174-residue protein sequence, read N- to C-terminus: Methionine-R-sulfoxide reductase B2, mitochondrial (174 aa).

A mitochondrion-targeting transit peptide spans 1 to 61 (MARLLRALRG…PEQFYVTREK (61 aa)). A MsrB domain is found at 62–172 (GTEAPFSGMY…NSVALKFKPS (111 aa)). Residues C82, C85, C138, and C141 each contribute to the Zn(2+) site. C161 acts as the Nucleophile in catalysis.

It belongs to the MsrB Met sulfoxide reductase family. Zn(2+) is required as a cofactor.

The protein localises to the mitochondrion. It catalyses the reaction L-methionyl-[protein] + [thioredoxin]-disulfide + H2O = L-methionyl-(R)-S-oxide-[protein] + [thioredoxin]-dithiol. It carries out the reaction [thioredoxin]-disulfide + L-methionine + H2O = L-methionine (R)-S-oxide + [thioredoxin]-dithiol. Methionine-sulfoxide reductase that specifically reduces methionine (R)-sulfoxide back to methionine. While in many cases, methionine oxidation is the result of random oxidation following oxidative stress, methionine oxidation is also a post-translational modification that takes place on specific residue. Upon oxidative stress, may play a role in the preservation of mitochondrial integrity by decreasing the intracellular reactive oxygen species build-up through its scavenging role, hence contributing to cell survival and protein maintenance. The sequence is that of Methionine-R-sulfoxide reductase B2, mitochondrial (Msrb2) from Rattus norvegicus (Rat).